Here is a 306-residue protein sequence, read N- to C-terminus: MHGHFNGLKTTLLFALMWAIIMLIWWATGGSRQTLSIYIVIGLITTFGTYWFSDKLAIASMGAREVSEQEAPEIYQIVRELSAKAGKPMPRIYIAPTMSPNAFATGRNERHAAVCCTQGILQILNARELRGVLGHELMHVYNHDILTSAIASAMATVISYLGYSLMYFGGGSRDDRDSSGGLGLIGALLSVILAPIAASLIQMAISRTREYDADEDGSLLTGDPEALASALNKISYGAQTTPMRKTAGTQSVSAMMIANPFSAVGFSRLFSTHPPTDERIARLMQMANEMNGTPIAPPTYSTRVGR.

2 helical membrane passes run 10-30 (TTLL…ATGG) and 33-53 (QTLS…YWFS). A Zn(2+)-binding site is contributed by His135. Glu136 is an active-site residue. His139 provides a ligand contact to Zn(2+). Transmembrane regions (helical) follow at residues 149–169 (AIAS…MYFG) and 181–201 (GLGL…ASLI). A Zn(2+)-binding site is contributed by Glu210.

The protein belongs to the peptidase M48B family. Zn(2+) serves as cofactor.

It is found in the cell membrane. This is Protease HtpX homolog from Bifidobacterium longum (strain NCC 2705).